The chain runs to 238 residues: MQWREMGVVMGTRPYGDEHLLLSILTRNRGLRRGLTRLTKKRPLQIGDLIDATWRAKLPTNLGHFTCEVIASAFYSYFRDRIKLMCLSSITHIMSTALPENEPHPTLYDSFQDFAAAAEAEAPWYNHYLKLELLVLSQLGFALDLSKCAVSNSKDNLLFISPKTGRALSEAVGHAYRNKLLPLPKVLRSISCGVETECCSADEFALSLKILGFFLHRHLLQESHTFQESRKILTGLLG.

This sequence belongs to the RecO family.

Involved in DNA repair and RecF pathway recombination. The chain is DNA repair protein RecO from Anaplasma marginale (strain Florida).